The sequence spans 213 residues: Probable nicotinate-nucleotide adenylyltransferase (213 aa).

This sequence belongs to the NadD family.

It catalyses the reaction nicotinate beta-D-ribonucleotide + ATP + H(+) = deamido-NAD(+) + diphosphate. Its pathway is cofactor biosynthesis; NAD(+) biosynthesis; deamido-NAD(+) from nicotinate D-ribonucleotide: step 1/1. Its function is as follows. Catalyzes the reversible adenylation of nicotinate mononucleotide (NaMN) to nicotinic acid adenine dinucleotide (NaAD). The polypeptide is Probable nicotinate-nucleotide adenylyltransferase (Shigella boydii serotype 4 (strain Sb227)).